The following is a 223-amino-acid chain: MOB kinase activator-like 4 (223 aa).

The interval 1-21 (MKMADGSTILRRNRPGTKSKD) is disordered. Zn(2+) contacts are provided by Cys92, Cys97, His169, and His174.

This sequence belongs to the MOB1/phocein family.

The chain is MOB kinase activator-like 4 (Mob4) from Drosophila melanogaster (Fruit fly).